The sequence spans 710 residues: Polyribonucleotide nucleotidyltransferase (710 aa).

Residues Asp-487 and Asp-493 each contribute to the Mg(2+) site. Positions 554–613 (PRIEVMNIPVDKIREVIGSGGKVIREIVEKTGAKINIEDDGTVKIASSSGKEIEAARKWI) constitute a KH domain. Residues 623–691 (GQIYEGTVVK…ERGKVRLSMK (69 aa)) form the S1 motif domain.

It belongs to the polyribonucleotide nucleotidyltransferase family. It depends on Mg(2+) as a cofactor.

The protein localises to the cytoplasm. It carries out the reaction RNA(n+1) + phosphate = RNA(n) + a ribonucleoside 5'-diphosphate. Involved in mRNA degradation. Catalyzes the phosphorolysis of single-stranded polyribonucleotides processively in the 3'- to 5'-direction. The sequence is that of Polyribonucleotide nucleotidyltransferase from Rhizobium rhizogenes (strain K84 / ATCC BAA-868) (Agrobacterium radiobacter).